The sequence spans 259 residues: Ribosomal RNA small subunit methyltransferase A (259 aa).

6 residues coordinate S-adenosyl-L-methionine: Asn-13, Leu-15, Gly-39, Glu-60, Asp-84, and Asn-101.

Belongs to the class I-like SAM-binding methyltransferase superfamily. rRNA adenine N(6)-methyltransferase family. RsmA subfamily.

It is found in the cytoplasm. The enzyme catalyses adenosine(1518)/adenosine(1519) in 16S rRNA + 4 S-adenosyl-L-methionine = N(6)-dimethyladenosine(1518)/N(6)-dimethyladenosine(1519) in 16S rRNA + 4 S-adenosyl-L-homocysteine + 4 H(+). In terms of biological role, specifically dimethylates two adjacent adenosines (A1518 and A1519) in the loop of a conserved hairpin near the 3'-end of 16S rRNA in the 30S particle. May play a critical role in biogenesis of 30S subunits. The chain is Ribosomal RNA small subunit methyltransferase A from Mesomycoplasma hyopneumoniae (strain J / ATCC 25934 / NCTC 10110) (Mycoplasma hyopneumoniae).